A 499-amino-acid chain; its full sequence is Sialic acid-binding Ig-like lectin 8 (499 aa).

An N-terminal signal peptide occupies residues 1–16 (MLLLLLLLPLLWGTKG). Topologically, residues 17–363 (MEGDRQYGDG…RPVSQVTLAA (347 aa)) are extracellular. A carbohydrate is bound by residues Tyr23, 72 to 75 (RPYQ), Arg125, and 134 to 138 (SYKSQ). One can recognise an Ig-like V-type domain in the interval 40-123 (GLCVHVPCSF…ARKRDKGSYF (84 aa)). 3 disulfides stabilise this stretch: Cys42–Cys181, Cys47–Cys107, and Cys175–Cys224. Ig-like C2-type domains lie at 157–240 (PDIL…STVR) and 246–344 (PPWN…LSLS). An N-linked (GlcNAc...) asparagine glycan is attached at Asn172. Asn249 and Asn267 each carry an N-linked (GlcNAc...) asparagine glycan. Residues Cys283 and Cys328 are joined by a disulfide bond. The helical transmembrane segment at 364 to 384 (VGGAGATALAFLSFCIIFIIV) threads the bilayer. At 385–499 (RSCRKKSARP…HNPSSKEVRG (115 aa)) the chain is on the cytoplasmic side. The interval 410–443 (RGSASQGPLTESWKDGNPLKKPPPAVAPSSGEEG) is disordered. Positions 445–450 (LHYATL) match the ITIM motif motif. Disordered regions lie at residues 451-470 (SFHK…DSEY) and 478-499 (RETA…EVRG). The SLAM-like motif motif lies at 468 to 473 (SEYSEI).

The protein belongs to the immunoglobulin superfamily. SIGLEC (sialic acid binding Ig-like lectin) family. In terms of tissue distribution, expressed specifically on blood cells namely basophil, mast cells and eosinophils.

The protein resides in the membrane. Functionally, putative adhesion molecule that mediates sialic-acid dependent binding to blood cells. Preferentially binds to alpha-2,3-linked sialic acid. Also binds to alpha-2,6-linked sialic acid. The sialic acid recognition site may be masked by cis interactions with sialic acids on the same cell surface. Recognizes simultaneously epitopes having a terminal N-acetylneuraminic acid (sialic acid) and an underlying 6-O-sulfated galactose. Preferentially binds to Gal-6-sulfated sialyl-Lewis X glycan epitopes. The protein is Sialic acid-binding Ig-like lectin 8 (SIGLEC8) of Homo sapiens (Human).